We begin with the raw amino-acid sequence, 475 residues long: Glutamyl-tRNA(Gln) amidotransferase subunit A (475 aa).

Catalysis depends on charge relay system residues Lys76 and Ser151. Ser175 acts as the Acyl-ester intermediate in catalysis.

It belongs to the amidase family. GatA subfamily. In terms of assembly, heterotrimer of A, B and C subunits.

The catalysed reaction is L-glutamyl-tRNA(Gln) + L-glutamine + ATP + H2O = L-glutaminyl-tRNA(Gln) + L-glutamate + ADP + phosphate + H(+). Functionally, allows the formation of correctly charged Gln-tRNA(Gln) through the transamidation of misacylated Glu-tRNA(Gln) in organisms which lack glutaminyl-tRNA synthetase. The reaction takes place in the presence of glutamine and ATP through an activated gamma-phospho-Glu-tRNA(Gln). This is Glutamyl-tRNA(Gln) amidotransferase subunit A from Pelodictyon phaeoclathratiforme (strain DSM 5477 / BU-1).